The primary structure comprises 491 residues: MSNPIENTENSQNTSSSRFLRNVQRLALNNVTNTTFQKSNANNPALTNFKSTLNSVKKEGSRIPQFTRESVSRSTAAQEEKRTLKENGIQLPKNNLLDDKENQDPSSQQFGALTSIKEGRAELPANISLQESSSAKEIIQHDPLKGVGSSTEVVHNSVENEKLHPARSQLQVRNTESETDSGKKRPISTIVEQELPKKFKVCDENGKEEYEWEDLDAEDVNDPFMVSEYVNDIFEYLHQLEVITLPKKEDLYQHRNIHQNRDILVNWLVKIHNKFGLLPETLYLAINIMDRFLGKELVQLDKLQLVGTSCLFIASKYEEVYSPSIKHFASETDGACTEDEIKEGEKFILKTLKFNLNYPNPMNFLRRISKADDYDIQSRTLAKFLLEISLVDFRFIGILPSLCAAAAMFMSRKMLGKGKWDGNLIHYSGGYTKEELAPVCHMIMDYLVSPIVHDEFHRKYQSRRFMKASIISVQWALKVRKNGYDIMTLHE.

Residue Ser-2 is modified to N-acetylserine. Disordered regions lie at residues 59-107 (EGSR…DPSS) and 164-184 (HPAR…SGKK). A compositionally biased stretch (polar residues) spans 67–77 (TRESVSRSTAA).

This sequence belongs to the cyclin family. Cyclin AB subfamily. Interacts with NAP1.

Essential for the control of the cell cycle at the G2/M (mitosis) transition. Interacts with the CDC2 protein kinase to form MPF. G2/M cyclins accumulate steadily during G2 and are abruptly destroyed at mitosis. The polypeptide is G2/mitotic-specific cyclin-2 (CLB2) (Saccharomyces cerevisiae (strain ATCC 204508 / S288c) (Baker's yeast)).